We begin with the raw amino-acid sequence, 173 residues long: L-2,4-diaminobutyric acid acetyltransferase (173 aa).

One can recognise an N-acetyltransferase domain in the interval 14-170 (WVFRRPTQED…TEYLYRIPLQ (157 aa)).

It belongs to the acetyltransferase family. EctA subfamily.

It carries out the reaction L-2,4-diaminobutanoate + acetyl-CoA = (2S)-4-acetamido-2-aminobutanoate + CoA + H(+). It participates in amine and polyamine biosynthesis; ectoine biosynthesis; L-ectoine from L-aspartate 4-semialdehyde: step 2/3. Catalyzes the acetylation of L-2,4-diaminobutyrate (DABA) to gamma-N-acetyl-alpha,gamma-diaminobutyric acid (ADABA) with acetyl coenzyme A. In Vibrio cholerae serotype O1 (strain ATCC 39315 / El Tor Inaba N16961), this protein is L-2,4-diaminobutyric acid acetyltransferase (ectA).